The chain runs to 223 residues: Glutelin-2 (223 aa).

A signal peptide spans 1-19 (MRVLLVALALLALAASATS). Tandem repeats lie at residues 31–36 (PPPVHL), 37–42 (PPPVHL), 43–48 (PPPVHL), 49–54 (PPPVHL), 55–60 (PPPVHL), 61–66 (PPPVHL), 67–72 (PPPVHV), 73–78 (PPPVHL), 97–104 (QPHPCPCQ), and 105–112 (QPHPSPCQ). The interval 31–78 (PPPVHLPPPVHLPPPVHLPPPVHLPPPVHLPPPVHLPPPVHVPPPVHL) is 8 X 6 AA tandem repeats of P-P-P-V-H-L. Positions 97-112 (QPHPCPCQQPHPSPCQ) are 2 X 8 AA tandem repeats of Q-P-H-P-C-P-C-Q.

This sequence belongs to the gliadin/glutenin family.

It localises to the vacuole. It is found in the aleurone grain membrane. In terms of biological role, seed storage protein. It accounts for about 15% of the total endosperm protein content. The chain is Glutelin-2 from Zea mays (Maize).